The chain runs to 366 residues: ERCC4 domain-containing protein EP364R (366 aa).

One can recognise an ERCC4 domain in the interval 3-101 (FLVADHREHH…QLYFFVEGPA (99 aa)). 2 stretches are compositionally biased toward polar residues: residues 320-331 (RPTMQVATQPAA) and 349-366 (PTGH…TVRC). The disordered stretch occupies residues 320–366 (RPTMQVATQPAATQPLHKVSDDASSDASSPTGHQTLSKEMSLNTVRC).

Belongs to the asfivirus EP364R family.

Functionally, plays a role in the inhibition of type I interferon signaling pathway. Mechanistically, specifically interacts with 2',3'-cGAMP and cleaves it via its phosphodiesterase activity. In turn, prevents 2',3'-cGAMP interaction with host ER-resident STING1 leading to inhibition of downstream signaling pathway and type I interferon production. The chain is ERCC4 domain-containing protein EP364R from Ornithodoros (relapsing fever ticks).